The sequence spans 255 residues: Developmental and secondary metabolism regulator MVE1 (255 aa).

The region spanning 31–226 (GRKLTYRMSV…AEQGCRVRIR (196 aa)) is the Velvet domain. A Nuclear localization signal motif is present at residues 45-50 (VRARAC). Disordered regions lie at residues 163-184 (CKSP…DAHV) and 229-255 (VRMR…QARA). Acidic residues predominate over residues 245-255 (NYEDETAQARA).

Belongs to the velvet family. VeA subfamily. As to quaternary structure, component of the heterotrimeric velvet complex composed of LAE1, MVE1 and VEL2; MVE1 acting as a bridging protein between LAE1 and VEL2.

The protein resides in the nucleus. Its subcellular location is the cytoplasm. Component of the velvet transcription factor complex that controls sexual/asexual developmental ratio in response to light, promoting sexual development in the darkness while stimulating asexual sporulation under illumination. The velvet complex hat acts as a global regulator for secondary metabolite gene expression. Controls the expression of the melanin gene cluster. Mediates the light-stimulated formation of aerial mycelia. The sequence is that of Developmental and secondary metabolism regulator MVE1 from Zymoseptoria tritici (strain CBS 115943 / IPO323) (Speckled leaf blotch fungus).